A 453-amino-acid polypeptide reads, in one-letter code: MITLKQALSLSQDELETLKNEIDAKVRASDLNAYIKAPSLNGASAKGVPILIKDNISVKGWEITCSSKILKGYVAPYHASVMENLHQNSMAGFGLSNMDEFAMGSTTESSCYGITKNPRDKNRVPGGSSGGSAAAVAGGLAVAALGSDTGGSIRQPASYCGCVGLKPTYGRVSRYGLIAYCSSFDQIGPITQNVEDASILFDAISGHDNKDSTSANLKPTQTFKNLNKDKRFKIAILRDHIKDASSEVQLAYENTLKALKEMGHEIVEKKMLDSHYQISIYYIISMAEASSNLARFDGVRYGRRAQNIKDLKELYLKSRSEGFGDEVKRRIMLGNFVLSSGYYDAYYLKAQQMRLIIKEQYNKIFEEVDLIFTPVAPTSAHLFNYHASPLEMYLSDIYTIGANLSGLPALSLPVAKDPLGLPIGMQFIAKAFDEQSLLDISYALEQELDLKLD.

Residues K53 and S128 each act as charge relay system in the active site. The Acyl-ester intermediate role is filled by S152.

It belongs to the amidase family. GatA subfamily. Heterotrimer of A, B and C subunits.

It carries out the reaction L-glutamyl-tRNA(Gln) + L-glutamine + ATP + H2O = L-glutaminyl-tRNA(Gln) + L-glutamate + ADP + phosphate + H(+). Its function is as follows. Allows the formation of correctly charged Gln-tRNA(Gln) through the transamidation of misacylated Glu-tRNA(Gln) in organisms which lack glutaminyl-tRNA synthetase. The reaction takes place in the presence of glutamine and ATP through an activated gamma-phospho-Glu-tRNA(Gln). The chain is Glutamyl-tRNA(Gln) amidotransferase subunit A from Helicobacter pylori (strain G27).